Here is a 117-residue protein sequence, read N- to C-terminus: UPF0102 protein YE3728 (117 aa).

Belongs to the UPF0102 family.

In Yersinia enterocolitica serotype O:8 / biotype 1B (strain NCTC 13174 / 8081), this protein is UPF0102 protein YE3728.